Consider the following 109-residue polypeptide: Phosphoribosyl-ATP pyrophosphatase (109 aa).

It belongs to the PRA-PH family.

Its subcellular location is the cytoplasm. It carries out the reaction 1-(5-phospho-beta-D-ribosyl)-ATP + H2O = 1-(5-phospho-beta-D-ribosyl)-5'-AMP + diphosphate + H(+). The protein operates within amino-acid biosynthesis; L-histidine biosynthesis; L-histidine from 5-phospho-alpha-D-ribose 1-diphosphate: step 2/9. In Geobacter metallireducens (strain ATCC 53774 / DSM 7210 / GS-15), this protein is Phosphoribosyl-ATP pyrophosphatase.